Reading from the N-terminus, the 403-residue chain is Ribosomal RNA large subunit methyltransferase I (403 aa).

The PUA domain occupies Y9–R88.

Belongs to the methyltransferase superfamily. RlmI family.

It is found in the cytoplasm. It catalyses the reaction cytidine(1962) in 23S rRNA + S-adenosyl-L-methionine = 5-methylcytidine(1962) in 23S rRNA + S-adenosyl-L-homocysteine + H(+). Functionally, specifically methylates the cytosine at position 1962 (m5C1962) of 23S rRNA. This is Ribosomal RNA large subunit methyltransferase I from Salmonella arizonae (strain ATCC BAA-731 / CDC346-86 / RSK2980).